The chain runs to 113 residues: Putative pterin-4-alpha-carbinolamine dehydratase (113 aa).

Belongs to the pterin-4-alpha-carbinolamine dehydratase family.

The enzyme catalyses (4aS,6R)-4a-hydroxy-L-erythro-5,6,7,8-tetrahydrobiopterin = (6R)-L-erythro-6,7-dihydrobiopterin + H2O. This Nitrosococcus oceani (strain ATCC 19707 / BCRC 17464 / JCM 30415 / NCIMB 11848 / C-107) protein is Putative pterin-4-alpha-carbinolamine dehydratase.